Consider the following 182-residue polypeptide: Probable RNA 2'-phosphotransferase (182 aa).

It belongs to the KptA/TPT1 family.

Removes the 2'-phosphate from RNA via an intermediate in which the phosphate is ADP-ribosylated by NAD followed by a presumed transesterification to release the RNA and generate ADP-ribose 1''-2''-cyclic phosphate (APPR&gt;P). May function as an ADP-ribosylase. The polypeptide is Probable RNA 2'-phosphotransferase (Herpetosiphon aurantiacus (strain ATCC 23779 / DSM 785 / 114-95)).